We begin with the raw amino-acid sequence, 256 residues long: Type III pantothenate kinase (256 aa).

6–13 lines the ATP pocket; that stretch reads DVGNTNTV. Substrate is bound by residues tyrosine 100 and 107-110; that span reads GADR. Aspartate 109 (proton acceptor) is an active-site residue. Aspartate 129 contributes to the K(+) binding site. An ATP-binding site is contributed by threonine 132. Threonine 184 provides a ligand contact to substrate.

The protein belongs to the type III pantothenate kinase family. In terms of assembly, homodimer. NH4(+) is required as a cofactor. K(+) serves as cofactor.

The protein resides in the cytoplasm. It carries out the reaction (R)-pantothenate + ATP = (R)-4'-phosphopantothenate + ADP + H(+). It participates in cofactor biosynthesis; coenzyme A biosynthesis; CoA from (R)-pantothenate: step 1/5. Catalyzes the phosphorylation of pantothenate (Pan), the first step in CoA biosynthesis. In Myxococcus xanthus (strain DK1622), this protein is Type III pantothenate kinase.